A 508-amino-acid chain; its full sequence is Photosystem II CP47 reaction center protein (508 aa).

The next 6 helical transmembrane spans lie at 21–36, 101–115, 140–156, 203–218, 237–252, and 457–472; these read AVHIMHTALVSGWAGS, IVFSGLCFLAAIWHW, GIHLFLSGLACFGFGAF, IAAGTLGILAGLFHLS, VLSSSIAAVFFAAFVV, and SFALLFFFGHIWHGAR.

It belongs to the PsbB/PsbC family. PsbB subfamily. PSII is composed of 1 copy each of membrane proteins PsbA, PsbB, PsbC, PsbD, PsbE, PsbF, PsbH, PsbI, PsbJ, PsbK, PsbL, PsbM, PsbT, PsbX, PsbY, PsbZ, Psb30/Ycf12, at least 3 peripheral proteins of the oxygen-evolving complex and a large number of cofactors. It forms dimeric complexes. It depends on Binds multiple chlorophylls. PSII binds additional chlorophylls, carotenoids and specific lipids. as a cofactor.

It localises to the plastid. The protein resides in the chloroplast thylakoid membrane. In terms of biological role, one of the components of the core complex of photosystem II (PSII). It binds chlorophyll and helps catalyze the primary light-induced photochemical processes of PSII. PSII is a light-driven water:plastoquinone oxidoreductase, using light energy to abstract electrons from H(2)O, generating O(2) and a proton gradient subsequently used for ATP formation. The protein is Photosystem II CP47 reaction center protein of Nandina domestica (Heavenly bamboo).